The sequence spans 545 residues: Membrane protein insertase YidC (545 aa).

The next 4 helical transmembrane spans lie at 350–370 (IIGN…AVLY), 424–444 (LPML…FASV), 461–481 (ADPY…QTYL), and 498–518 (PLVF…YWVI).

It belongs to the OXA1/ALB3/YidC family. Type 1 subfamily. Interacts with the Sec translocase complex via SecD. Specifically interacts with transmembrane segments of nascent integral membrane proteins during membrane integration.

Its subcellular location is the cell inner membrane. In terms of biological role, required for the insertion and/or proper folding and/or complex formation of integral membrane proteins into the membrane. Involved in integration of membrane proteins that insert both dependently and independently of the Sec translocase complex, as well as at least some lipoproteins. Aids folding of multispanning membrane proteins. The sequence is that of Membrane protein insertase YidC from Neisseria meningitidis serogroup A / serotype 4A (strain DSM 15465 / Z2491).